The chain runs to 148 residues: Nucleoside diphosphate kinase (148 aa).

Residues Lys-10, Phe-58, Arg-86, Thr-92, Arg-103, and Asn-113 each coordinate ATP. His-116 functions as the Pros-phosphohistidine intermediate in the catalytic mechanism.

Belongs to the NDK family. It depends on Mg(2+) as a cofactor.

It is found in the cytoplasm. It carries out the reaction a 2'-deoxyribonucleoside 5'-diphosphate + ATP = a 2'-deoxyribonucleoside 5'-triphosphate + ADP. The catalysed reaction is a ribonucleoside 5'-diphosphate + ATP = a ribonucleoside 5'-triphosphate + ADP. Its function is as follows. Major role in the synthesis of nucleoside triphosphates other than ATP. The ATP gamma phosphate is transferred to the NDP beta phosphate via a ping-pong mechanism, using a phosphorylated active-site intermediate. The polypeptide is Nucleoside diphosphate kinase (Thermoplasma acidophilum (strain ATCC 25905 / DSM 1728 / JCM 9062 / NBRC 15155 / AMRC-C165)).